A 340-amino-acid polypeptide reads, in one-letter code: Cytosolic Fe-S cluster assembly factor NBP35 (340 aa).

A disordered region spans residues 1–41 (MPSLVDPVANKTDEGNNRTDLKAPEPEHCPGTESEEAGKAD). Basic and acidic residues predominate over residues 11 to 30 (KTDEGNNRTDLKAPEPEHCP). [4Fe-4S] cluster is bound by residues Cys-29, Cys-43, Cys-46, and Cys-52. 82–89 (GKGGVGKS) is a binding site for ATP. The [4Fe-4S] cluster site is built by Cys-255 and Cys-258.

Belongs to the Mrp/NBP35 ATP-binding proteins family. NUBP1/NBP35 subfamily. In terms of assembly, heterotetramer of 2 NBP35 and 2 CFD1 chains. [4Fe-4S] cluster is required as a cofactor.

Its subcellular location is the cytoplasm. It is found in the nucleus. In terms of biological role, component of the cytosolic iron-sulfur (Fe/S) protein assembly (CIA) machinery. Required for maturation of extramitochondrial Fe-S proteins. The NBP35-CFD1 heterotetramer forms a Fe-S scaffold complex, mediating the de novo assembly of an Fe-S cluster and its transfer to target apoproteins. Required for biogenesis and export of both ribosomal subunits, which may reflect a role in assembly of the Fe/S clusters in RLI1, a protein which performs rRNA processing and ribosome export. The protein is Cytosolic Fe-S cluster assembly factor NBP35 of Yarrowia lipolytica (strain CLIB 122 / E 150) (Yeast).